Consider the following 319-residue polypeptide: Acetyl-coenzyme A carboxylase carboxyl transferase subunit alpha (319 aa).

One can recognise a CoA carboxyltransferase C-terminal domain in the interval 35-296; it reads NIDEEVHRLR…KAQLLEDLAD (262 aa).

It belongs to the AccA family. Acetyl-CoA carboxylase is a heterohexamer composed of biotin carboxyl carrier protein (AccB), biotin carboxylase (AccC) and two subunits each of ACCase subunit alpha (AccA) and ACCase subunit beta (AccD).

It is found in the cytoplasm. The catalysed reaction is N(6)-carboxybiotinyl-L-lysyl-[protein] + acetyl-CoA = N(6)-biotinyl-L-lysyl-[protein] + malonyl-CoA. The protein operates within lipid metabolism; malonyl-CoA biosynthesis; malonyl-CoA from acetyl-CoA: step 1/1. In terms of biological role, component of the acetyl coenzyme A carboxylase (ACC) complex. First, biotin carboxylase catalyzes the carboxylation of biotin on its carrier protein (BCCP) and then the CO(2) group is transferred by the carboxyltransferase to acetyl-CoA to form malonyl-CoA. The polypeptide is Acetyl-coenzyme A carboxylase carboxyl transferase subunit alpha (Salmonella paratyphi C (strain RKS4594)).